The chain runs to 924 residues: 104 kDa microneme/rhoptry antigen (924 aa).

The signal sequence occupies residues 1–19 (MKFLILLFNILCLFPVLAA). Residues 490–907 (SKKKLAPITE…KKPKKPDSAY (418 aa)) are disordered. 2 stretches are compositionally biased toward basic and acidic residues: residues 522-532 (PGDKEGSEGHK) and 573-588 (GPKD…EPRK). Over residues 592-617 (PRTASPTRRPSPKLPQLSKLPKSTSP) the composition is skewed to low complexity. The segment covering 653–673 (SFKEKFYDDYSKAASRSKETK) has biased composition (basic and acidic residues). The segment covering 724–736 (SPSTSPSEFFTPP) has biased composition (low complexity). 3 stretches are compositionally biased toward basic and acidic residues: residues 737–747 (ESKRTRFHETP), 770–783 (KSPD…RSPS), and 816–825 (DPGRMAKDAS). Residues 857–867 (DDEGTEADDEE) show a composition bias toward acidic residues. Residues 868 to 878 (THPPEERQKTE) are compositionally biased toward basic and acidic residues. Residues 879 to 901 (VRRRRPPKKPSKSPRPSKPKKPK) are compositionally biased toward basic residues. Asp-904 is lipidated: GPI-anchor amidated aspartate. The propeptide at 905–924 (SAYIPSILAILVVSLIVGIL) is removed in mature form.

It is found in the cell membrane. This chain is 104 kDa microneme/rhoptry antigen, found in Theileria parva (East coast fever infection agent).